A 78-amino-acid chain; its full sequence is Toxin OAIP 5 (78 aa).

An N-terminal signal peptide occupies residues M1–A19. A propeptide spanning residues E20 to R40 is cleaved from the precursor. 3 cysteine pairs are disulfide-bonded: C43–C56, C47–C70, and C64–C75.

Belongs to the neurotoxin 12 (Hwtx-2) family. 05 (OAIP-5) subfamily. In terms of tissue distribution, expressed by the venom gland.

Its subcellular location is the secreted. In terms of biological role, probable ion channel inhibitor. Shows insecticidal activity when injected into mealworms. This chain is Toxin OAIP 5, found in Selenotypus plumipes (Australian featherleg tarantula).